We begin with the raw amino-acid sequence, 700 residues long: Methionine--tRNA ligase (700 aa).

A 'HIGH' region motif is present at residues 14-24 (PYANGPVHLGH). Residues C146, C149, C159, and C162 each contribute to the Zn(2+) site. A 'KMSKS' region motif is present at residues 343–347 (KFSKS). K346 is an ATP binding site. In terms of domain architecture, tRNA-binding spans 599–700 (EFEKIDLRVA…GDSIVGKPVK (102 aa)).

It belongs to the class-I aminoacyl-tRNA synthetase family. MetG type 1 subfamily. In terms of assembly, homodimer. Requires Zn(2+) as cofactor.

Its subcellular location is the cytoplasm. The enzyme catalyses tRNA(Met) + L-methionine + ATP = L-methionyl-tRNA(Met) + AMP + diphosphate. Its function is as follows. Is required not only for elongation of protein synthesis but also for the initiation of all mRNA translation through initiator tRNA(fMet) aminoacylation. The chain is Methionine--tRNA ligase from Chloroherpeton thalassium (strain ATCC 35110 / GB-78).